The following is a 445-amino-acid chain: Cholesterol side-chain cleavage enzyme, mitochondrial (445 aa).

The N-terminal 36 residues, 1–36 (RGLPSRSVFLRGCQASLSTAQERLGHPGVPTREGVR), are a transit peptide targeting the mitochondrion.

It belongs to the cytochrome P450 family. As to quaternary structure, interacts with FDX1/adrenodoxin. Heme serves as cofactor.

The protein localises to the mitochondrion inner membrane. It carries out the reaction 6 reduced [adrenodoxin] + cholesterol + 3 O2 + 6 H(+) = 4-methylpentanal + pregnenolone + 6 oxidized [adrenodoxin] + 4 H2O. It catalyses the reaction 2 reduced [adrenodoxin] + cholesterol + O2 + 2 H(+) = (22R)-hydroxycholesterol + 2 oxidized [adrenodoxin] + H2O. The catalysed reaction is (22R)-hydroxycholesterol + 2 reduced [adrenodoxin] + O2 + 2 H(+) = (20R,22R)-20,22-dihydroxycholesterol + 2 oxidized [adrenodoxin] + H2O. The enzyme catalyses (20R,22R)-20,22-dihydroxycholesterol + 2 reduced [adrenodoxin] + O2 + 2 H(+) = 4-methylpentanal + pregnenolone + 2 oxidized [adrenodoxin] + 2 H2O. It functions in the pathway lipid metabolism; C21-steroid hormone metabolism. Its pathway is steroid metabolism; cholesterol metabolism. A cytochrome P450 monooxygenase that catalyzes the side-chain hydroxylation and cleavage of cholesterol to pregnenolone, the precursor of most steroid hormones. Catalyzes three sequential oxidation reactions of cholesterol, namely the hydroxylation at C22 followed with the hydroxylation at C20 to yield 20R,22R-hydroxycholesterol that is further cleaved between C20 and C22 to yield the C21-steroid pregnenolone and 4-methylpentanal. Mechanistically, uses molecular oxygen inserting one oxygen atom into a substrate and reducing the second into a water molecule. Two electrons are provided by NADPH via a two-protein mitochondrial transfer system comprising flavoprotein FDXR (adrenodoxin/ferredoxin reductase) and nonheme iron-sulfur protein FDX1 or FDX2 (adrenodoxin/ferredoxin). This Oryctolagus cuniculus (Rabbit) protein is Cholesterol side-chain cleavage enzyme, mitochondrial (CYP11A1).